Consider the following 330-residue polypeptide: Type I restriction enzyme MpnII specificity subunit (330 aa).

It belongs to the type-I restriction system S methylase family. The methyltransferase is composed of M and S polypeptides.

Its function is as follows. The specificity (S) subunit of a type I restriction enzyme; this subunit dictates DNA sequence specificity. The M and S subunits together form a methyltransferase (MTase) that probably methylates A-2 on the top strand and A-3 on the bottom strand of the sequence 5'-GAN(7)TAY-3'. As the bacterial DNA is methylated on this sequence and this is the only type I methylase in the genome, it is probably responsible for all of the methylation on this site in the genome. The R subunit has multiple frameshifts and is probably not expressed in this bacteria. The chain is Type I restriction enzyme MpnII specificity subunit from Mycoplasma pneumoniae (strain ATCC 29342 / M129 / Subtype 1) (Mycoplasmoides pneumoniae).